The following is a 106-amino-acid chain: MAPLIPGELIPEPGELELNAGRPVTTISVANGGDRPVQVGSHFHFAEANAALQFDRDAARGQRLDIPAGTAIRFEPGDHRDVNLIPFAGHRRVIGFNGRINGPIDA.

It belongs to the urease beta subunit family. In terms of assembly, heterotrimer of UreA (gamma), UreB (beta) and UreC (alpha) subunits. Three heterotrimers associate to form the active enzyme.

The protein localises to the cytoplasm. It catalyses the reaction urea + 2 H2O + H(+) = hydrogencarbonate + 2 NH4(+). Its pathway is nitrogen metabolism; urea degradation; CO(2) and NH(3) from urea (urease route): step 1/1. The polypeptide is Urease subunit beta (Synechococcus sp. (strain CC9902)).